The chain runs to 473 residues: G2/mitotic-specific cyclin-1 (473 aa).

Positions 1–12 are enriched in polar residues; sequence MGSRNIVQQQNR. Disordered stretches follow at residues 1-23 and 134-155; these read MGSR…AMKQ and KEKP…APTL. Basic and acidic residues predominate over residues 134–147; it reads KEKPIEKEKAAEKS.

This sequence belongs to the cyclin family. Cyclin AB subfamily. In terms of assembly, interacts with the CDC2 and CDK2 protein kinases to form a serine/threonine kinase holoenzyme complex. The cyclin subunit imparts substrate specificity to the complex.

Essential for the control of the cell cycle at the G2/M (mitosis) transition. G2/M cyclins accumulate steadily during G2 and are abruptly destroyed at mitosis. The polypeptide is G2/mitotic-specific cyclin-1 (Antirrhinum majus (Garden snapdragon)).